The following is a 499-amino-acid chain: UTP--glucose-1-phosphate uridylyltransferase (499 aa).

The residue at position 2 (Ser-2) is an N-acetylserine. Position 17 is a phosphoserine (Ser-17). A Phosphothreonine modification is found at Thr-19. 2 positions are modified to phosphoserine: Ser-21 and Ser-79. Residues 109 to 112 (LNGG), Lys-123, Gln-186, and Gly-215 contribute to the UTP site. 111–112 (GG) contributes to the substrate binding site. Lys-123 provides a ligand contact to Mg(2+). Substrate contacts are provided by residues His-216 and 244–246 (NGD). Asp-246 contacts UTP. Asp-246 contributes to the Mg(2+) binding site. Arg-369 bears the Omega-N-methylarginine mark. Lys-388 is a binding site for UTP. Residue Lys-388 is part of the active site. The oligomerization stretch occupies residues 448–499 (HLTITGNVFLGKDVTLRGTVIIVCSDGHKIDIPNGSILENVVVTGNLQILEH).

The protein belongs to the UDPGP type 1 family. In terms of assembly, homooctamer.

The enzyme catalyses alpha-D-glucose 1-phosphate + UTP + H(+) = UDP-alpha-D-glucose + diphosphate. In terms of biological role, plays a central role as a glucosyl donor in cellular metabolic pathways. The polypeptide is UTP--glucose-1-phosphate uridylyltransferase (Saccharomyces cerevisiae (strain ATCC 204508 / S288c) (Baker's yeast)).